The sequence spans 417 residues: GTP-binding protein YPT11 (417 aa).

The interval methionine 1–glutamate 34 is disordered. Residues glycine 97 to threonine 104, aspartate 228 to glutamine 232, and asparagine 292 to aspartate 295 each bind GTP. S-geranylgeranyl cysteine attachment occurs at residues cysteine 415 and cysteine 416.

Belongs to the small GTPase superfamily. Rab family. Interacts with MYO2 (via C-terminal tail domain). Interacts with YIF1, YIP3, YIP4 and YIP5.

The protein resides in the endoplasmic reticulum membrane. It localises to the bud tip. Its subcellular location is the bud neck. Functionally, involved in the positive control of both endoplasmic reticulum (ER) and mitochondrion inheritance during cell divison. Required for the MYO2-dependent retention of newly inherited mitochondria at the bud tip in developing daughter cells. This chain is GTP-binding protein YPT11 (YPT11), found in Saccharomyces cerevisiae (strain RM11-1a) (Baker's yeast).